The sequence spans 328 residues: Dolichyl-diphosphooligosaccharide--protein glycosyltransferase subunit MAGT1 (328 aa).

An N-terminal signal peptide occupies residues 1–22 (MLHKLLIVVFLVVCLHDMRLNG). Topologically, residues 23-177 (QKKKETLLSE…DVHIRVIRPP (155 aa)) are extracellular. Positions 40–168 (WVSKRAVVRL…LARWVADRTD (129 aa)) constitute a Thioredoxin domain. N-linked (GlcNAc...) asparagine glycosylation is present at Asn64. Cys80 and Cys83 are oxidised to a cystine. The helical transmembrane segment at 178-198 (NYAGPLMLGLLLAFIGSLAYL) threads the bilayer. The Cytoplasmic portion of the chain corresponds to 199 to 202 (RRNN). The helical transmembrane segment at 203 to 223 (LEFLFNKNVWAFSALCFVLIM) threads the bilayer. Over 224-257 (TSGQMWNHIRGPPYAHKNPNTGQVSYIHGSSQAQ) the chain is Extracellular. The helical transmembrane segment at 258-278 (FVAETHIVLLFNAAVTIGMVL) threads the bilayer. Residues 279–293 (LHEAATSGLDIVKRK) lie on the Cytoplasmic side of the membrane. The chain crosses the membrane as a helical span at residues 294–314 (IMCVAGIGLVVLFFSWLLSVF). The Extracellular portion of the chain corresponds to 315 to 328 (RAKYHGYPYSFLFG).

Belongs to the OST3/OST6 family. Accessory component of the STT3B-containing form of the oligosaccharyltransferase (OST) complex.

The protein resides in the cell membrane. It localises to the endoplasmic reticulum. The protein localises to the endoplasmic reticulum membrane. It participates in protein modification; protein glycosylation. Accessory component of the STT3B-containing form of the N-oligosaccharyl transferase (OST) complex which catalyzes the transfer of a high mannose oligosaccharide from a lipid-linked oligosaccharide donor to an asparagine residue within an Asn-X-Ser/Thr consensus motif in nascent polypeptide chains. Involved in N-glycosylation of STT3B-dependent substrates. Specifically required for the glycosylation of a subset of acceptor sites that are near cysteine residues; in this function seems to act redundantly with TUSC3. In its oxidized form proposed to form transient mixed disulfides with a glycoprotein substrate to facilitate access of STT3B to the unmodified acceptor site. Also has oxidoreductase-independent functions in the STT3B-containing OST complex possibly involving substrate recognition. Could indirectly play a role in Mg(2+) transport. The chain is Dolichyl-diphosphooligosaccharide--protein glycosyltransferase subunit MAGT1 from Danio rerio (Zebrafish).